The primary structure comprises 343 residues: MWLEWLVAWSWSLDGLRDCIATGIQSVRDCDGTAVITVACLLILFVWYCYHVGREQPRPHVSVNSLLQGVDANGLQNGSMYCQSPECARCTHHEGLNQKLYHNLQEYAKRYSWSGMGRIHKGIREQGRYLSSQPSIQKPEVFFLPDLPTTPYFSRDAQKHDVELLERNFQAILCEFETLYKAFSNCSLPQGWKVNSTPSGEWFTFDFVSQGVCVPRNCRKCPRTYRLLGSLRTCIGNNVFGNACISVLSPGTVITEHYGPTNIRIRCHLGLKTPNGCELVVGGEPQCWAEGRCLLFDDSFLHTAFHEGSAEDGPRVVFMVDLWHPNVAAAERQALDFIFAPGR.

Residues 1-31 are Cytoplasmic-facing; it reads MWLEWLVAWSWSLDGLRDCIATGIQSVRDCD. The helical transmembrane segment at 32-52 threads the bilayer; sequence GTAVITVACLLILFVWYCYHV. At 53–343 the chain is on the lumenal side; sequence GREQPRPHVS…ALDFIFAPGR (291 aa). Residues Asn77 and Asn185 are each glycosylated (N-linked (GlcNAc...) asparagine). 2-oxoglutarate-binding residues include Trp202 and Ser246. A Fe cation-binding site is contributed by His257. Residue 266 to 268 coordinates 2-oxoglutarate; sequence RCH. His302 is a binding site for Fe cation. Arg315 contacts 2-oxoglutarate.

Belongs to the aspartyl/asparaginyl beta-hydroxylase family. The cofactor is Fe cation.

Its subcellular location is the membrane. May function as 2-oxoglutarate-dependent dioxygenase. This chain is Aspartate beta-hydroxylase domain-containing protein 2 (Asphd2), found in Mus musculus (Mouse).